The following is a 339-amino-acid chain: MIDDRKLQILRAIIQDYISTGEPVGSRTIAKKYNLGVSSATIRNEMADLEDMGFLEQPHTSAGRIPSSRGYRLYVDRMIEFERLSSEEEGLIRNSIIDGTLYEVDKIIKQTSALLSELTKMTCIVKAPSVHKSFVKSIQLLKVDDVSILCVLVTDNGVIRNTVIKVKSVPISEELIKISKIITERLKNLTIEQINLEVISNLNRALSGYEDIVNAVLPALYESLKGDETSEVFLEGTINIFNYPEYNNIHKAKEILELLHDKKSISELISDSDDMTVKIGDEIFVPEAKECSIISAGYHVGDKSLGTIALIGPRRINYSKVLSIMTEVMKELNETLKNK.

It belongs to the HrcA family.

Its function is as follows. Negative regulator of class I heat shock genes (grpE-dnaK-dnaJ and groELS operons). Prevents heat-shock induction of these operons. This chain is Heat-inducible transcription repressor HrcA, found in Clostridium perfringens (strain 13 / Type A).